Consider the following 87-residue polypeptide: Cytochrome c6 (87 aa).

Positions 10, 13, 14, and 56 each coordinate heme c.

The protein belongs to the cytochrome c family. PetJ subfamily. Monomer. Post-translationally, binds 1 heme c group covalently per subunit.

The protein resides in the plastid. It localises to the chloroplast thylakoid lumen. Its function is as follows. Functions as an electron carrier between membrane-bound cytochrome b6-f and photosystem I in oxygenic photosynthesis. The chain is Cytochrome c6 (petJ) from Euglena viridis (Cercaria viridis).